A 503-amino-acid polypeptide reads, in one-letter code: Probable protein kinase UbiB (503 aa).

A helical membrane pass occupies residues 13 to 35; sequence TFYRYRLAGLCASLMGSGWICAL. Positions 120–491 constitute a Protein kinase domain; sequence EFETEPIASA…QQRQSLWLAV (372 aa). ATP contacts are provided by residues 126 to 134 and Lys-148; that span reads IASASIAQV. Asp-283 functions as the Proton acceptor in the catalytic mechanism. A helical membrane pass occupies residues 485–502; sequence QSLWLAVIAVVLLLILLL.

This sequence belongs to the ABC1 family. UbiB subfamily.

It localises to the cell inner membrane. It functions in the pathway cofactor biosynthesis; ubiquinone biosynthesis [regulation]. Its function is as follows. Is probably a protein kinase regulator of UbiI activity which is involved in aerobic coenzyme Q (ubiquinone) biosynthesis. The sequence is that of Probable protein kinase UbiB from Neisseria meningitidis serogroup A / serotype 4A (strain DSM 15465 / Z2491).